We begin with the raw amino-acid sequence, 187 residues long: MIVIVGLGNPGRKYAKTRHNVGFMVVDELARKYGLVFKEKNDYYITEWRLENKDITIIKPTTYMNLSGTAVKKVVNEKILKNLPESLIVIHDDVDMPLGKIKIKKNGSSGGHKGVQSIIDSLGTKDFIRIKIGIGKNPYQDVSEYVLSPFTSEQRAKIQEKISEAVESIVVIINEGVNKAMNIYNRL.

Residue Y14 participates in tRNA binding. Residue H19 is the Proton acceptor of the active site. TRNA-binding residues include Y63 and N65.

Belongs to the PTH family. As to quaternary structure, monomer.

The protein resides in the cytoplasm. The catalysed reaction is an N-acyl-L-alpha-aminoacyl-tRNA + H2O = an N-acyl-L-amino acid + a tRNA + H(+). Its function is as follows. Hydrolyzes ribosome-free peptidyl-tRNAs (with 1 or more amino acids incorporated), which drop off the ribosome during protein synthesis, or as a result of ribosome stalling. In terms of biological role, catalyzes the release of premature peptidyl moieties from peptidyl-tRNA molecules trapped in stalled 50S ribosomal subunits, and thus maintains levels of free tRNAs and 50S ribosomes. In Thermodesulfovibrio yellowstonii (strain ATCC 51303 / DSM 11347 / YP87), this protein is Peptidyl-tRNA hydrolase.